Here is a 283-residue protein sequence, read N- to C-terminus: Polyamine aminopropyltransferase (283 aa).

In terms of domain architecture, PABS spans 2-237 (ELWYTDQHTK…GHWLFGFASK (236 aa)). Glutamine 31 contacts S-methyl-5'-thioadenosine. Spermidine is bound by residues histidine 62 and aspartate 86. Residues glutamate 106 and 137–138 (EG) each bind S-methyl-5'-thioadenosine. The active-site Proton acceptor is aspartate 155. Position 155–158 (155–158 (DCAD)) interacts with spermidine. Proline 162 serves as a coordination point for S-methyl-5'-thioadenosine.

This sequence belongs to the spermidine/spermine synthase family. As to quaternary structure, homodimer or homotetramer.

The protein localises to the cytoplasm. It carries out the reaction S-adenosyl 3-(methylsulfanyl)propylamine + putrescine = S-methyl-5'-thioadenosine + spermidine + H(+). It participates in amine and polyamine biosynthesis; spermidine biosynthesis; spermidine from putrescine: step 1/1. Its function is as follows. Catalyzes the irreversible transfer of a propylamine group from the amino donor S-adenosylmethioninamine (decarboxy-AdoMet) to putrescine (1,4-diaminobutane) to yield spermidine. This chain is Polyamine aminopropyltransferase, found in Lachnoclostridium phytofermentans (strain ATCC 700394 / DSM 18823 / ISDg) (Clostridium phytofermentans).